The following is a 170-amino-acid chain: tRNA-splicing endonuclease (170 aa).

Residues Y106, H116, and K147 contribute to the active site.

The protein belongs to the tRNA-intron endonuclease family. Archaeal short subfamily. In terms of assembly, homotetramer; although the tetramer contains four active sites, only two participate in the cleavage. Therefore, it should be considered as a dimer of dimers.

The catalysed reaction is pretRNA = a 3'-half-tRNA molecule with a 5'-OH end + a 5'-half-tRNA molecule with a 2',3'-cyclic phosphate end + an intron with a 2',3'-cyclic phosphate and a 5'-hydroxyl terminus.. Its function is as follows. Endonuclease that removes tRNA introns. Cleaves pre-tRNA at the 5'- and 3'-splice sites to release the intron. The products are an intron and two tRNA half-molecules bearing 2',3' cyclic phosphate and 5'-OH termini. Recognizes a pseudosymmetric substrate in which 2 bulged loops of 3 bases are separated by a stem of 4 bp. The polypeptide is tRNA-splicing endonuclease (Methanothermobacter thermautotrophicus (strain ATCC 29096 / DSM 1053 / JCM 10044 / NBRC 100330 / Delta H) (Methanobacterium thermoautotrophicum)).